The following is a 338-amino-acid chain: Beta-ketoacyl-[acyl-carrier-protein] synthase III 2 (338 aa).

Active-site residues include Cys119 and His255. Residues 256–260 (QANIR) form an ACP-binding region. Asn285 is an active-site residue.

The protein belongs to the thiolase-like superfamily. FabH family. As to quaternary structure, homodimer.

The protein localises to the cytoplasm. It catalyses the reaction malonyl-[ACP] + acetyl-CoA + H(+) = 3-oxobutanoyl-[ACP] + CO2 + CoA. Its pathway is lipid metabolism; fatty acid biosynthesis. In terms of biological role, catalyzes the condensation reaction of fatty acid synthesis by the addition to an acyl acceptor of two carbons from malonyl-ACP. Catalyzes the first condensation reaction which initiates fatty acid synthesis and may therefore play a role in governing the total rate of fatty acid production. Possesses both acetoacetyl-ACP synthase and acetyl transacylase activities. Its substrate specificity determines the biosynthesis of branched-chain and/or straight-chain of fatty acids. This is Beta-ketoacyl-[acyl-carrier-protein] synthase III 2 from Deinococcus radiodurans (strain ATCC 13939 / DSM 20539 / JCM 16871 / CCUG 27074 / LMG 4051 / NBRC 15346 / NCIMB 9279 / VKM B-1422 / R1).